The following is a 625-amino-acid chain: DNA-directed RNA polymerase subunit gamma (625 aa).

C71, C73, C86, and C89 together coordinate Zn(2+). Mg(2+) contacts are provided by D467, D469, and D471.

This sequence belongs to the RNA polymerase beta' chain family. RpoC1 subfamily. In cyanobacteria the RNAP catalytic core is composed of 2 alpha, 1 beta, 1 beta', 1 gamma and 1 omega subunit. When a sigma factor is associated with the core the holoenzyme is formed, which can initiate transcription. Requires Mg(2+) as cofactor. The cofactor is Zn(2+).

It catalyses the reaction RNA(n) + a ribonucleoside 5'-triphosphate = RNA(n+1) + diphosphate. Its function is as follows. DNA-dependent RNA polymerase catalyzes the transcription of DNA into RNA using the four ribonucleoside triphosphates as substrates. In Trichormus variabilis (strain ATCC 29413 / PCC 7937) (Anabaena variabilis), this protein is DNA-directed RNA polymerase subunit gamma.